Consider the following 265-residue polypeptide: Indole-3-glycerol phosphate synthase (265 aa).

It belongs to the TrpC family.

It carries out the reaction 1-(2-carboxyphenylamino)-1-deoxy-D-ribulose 5-phosphate + H(+) = (1S,2R)-1-C-(indol-3-yl)glycerol 3-phosphate + CO2 + H2O. Its pathway is amino-acid biosynthesis; L-tryptophan biosynthesis; L-tryptophan from chorismate: step 4/5. The polypeptide is Indole-3-glycerol phosphate synthase (Xanthomonas axonopodis pv. citri (strain 306)).